The chain runs to 365 residues: MYKNMNSHELIEESNNSGTPATKSSSKPTKKIRPRNDLVHYSKALSKVLRHTAKANGLQIREDGYIEVDSILKLPQFRGMGMELLLSIVKGNDKKRFTMEEVEGVLYIRANQGHSIKAVQVPMARIDNASSIPKVVHGTKKELWPVISKQGLSRMKRNHIHCATGLYGDPGVISGIRKSCTLYIYIDSAKAMQDGVEFYRSENGVILTEGVNGLLSSKYFSRVETSDGEVLLDAKASPKNNRSDESDQSDPESIDPFCDNLQALSMHELELLEEKHSNFGYSEGIIKGKMQVAQSGFDDGFKHGSRLGFQMGKTIGTLKAKLYIFEENEQMEILKQELDRLQESAEFHIFVANHKEEILKCIREK.

Disordered stretches follow at residues 1 to 35 and 231 to 254; these read MYKN…IRPR and LLDA…PESI. Residues 17-27 are compositionally biased toward low complexity; the sequence is SGTPATKSSSK.

Belongs to the KptA/TPT1 family.

It carries out the reaction 2'-phospho-[ligated tRNA] + NAD(+) = mature tRNA + ADP-alpha-D-ribose 1'',2''-cyclic phosphate + nicotinamide. Catalyzes the last step of tRNA splicing, the transfer of the splice junction 2'-phosphate from ligated tRNA to NAD to produce ADP-ribose 1''-2'' cyclic phosphate. The polypeptide is Putative tRNA 2'-phosphotransferase (Schizosaccharomyces pombe (strain 972 / ATCC 24843) (Fission yeast)).